Consider the following 293-residue polypeptide: Thiamine-monophosphate kinase (293 aa).

Positions 25, 39, 40, 68, and 113 each coordinate Mg(2+). ATP is bound by residues 112-113 (GD) and R136. D194 serves as a coordination point for Mg(2+). S196 serves as a coordination point for ATP. Residue D197 coordinates Mg(2+). Substrate contacts are provided by E243 and W286.

This sequence belongs to the thiamine-monophosphate kinase family. As to quaternary structure, homodimer.

It catalyses the reaction thiamine phosphate + ATP = thiamine diphosphate + ADP. The protein operates within cofactor biosynthesis; thiamine diphosphate biosynthesis; thiamine diphosphate from thiamine phosphate: step 1/1. With respect to regulation, is inhibited by AMP; the mode of AMP inhibition is uncompetitive for both TMP and ATP. Catalyzes the ATP-dependent phosphorylation of thiamine-monophosphate (TMP) to form thiamine-pyrophosphate (TPP), the active form of vitamin B1. The polypeptide is Thiamine-monophosphate kinase (Pyrobaculum calidifontis (strain DSM 21063 / JCM 11548 / VA1)).